The primary structure comprises 148 residues: Arginine repressor (148 aa).

The protein belongs to the ArgR family.

The protein resides in the cytoplasm. It functions in the pathway amino-acid biosynthesis; L-arginine biosynthesis [regulation]. In terms of biological role, regulates arginine biosynthesis genes. The sequence is that of Arginine repressor from Chlorobium limicola (strain DSM 245 / NBRC 103803 / 6330).